The sequence spans 114 residues: Probable acid stress chaperone HdeA (114 aa).

The N-terminal stretch at 1–26 (MIKALFNKNTALAAVAILALSGGAMA) is a signal peptide. A disulfide bridge links cysteine 46 with cysteine 94.

Belongs to the HdeA family.

It is found in the periplasm. In terms of biological role, required for optimal acid stress protection. Exhibits a chaperone-like activity only at low pH by suppressing non-specifically the aggregation of denaturated periplasmic proteins. Contributes to acid resistance. Not required for wild-type virulence in the BALB/c mouse model. This Brucella abortus (strain 2308) protein is Probable acid stress chaperone HdeA.